The primary structure comprises 163 residues: ATP synthase subunit delta, mitochondrial (163 aa).

The N-terminal 18 residues, 1-18, are a transit peptide targeting the mitochondrion; that stretch reads MLARTIQRFSVVAKRGYA.

The protein belongs to the ATPase epsilon chain family. Subunit of the F-type ATPase which has 2 components, CF(1) - the catalytic core - and CF(0) - the membrane proton channel.

The protein resides in the mitochondrion. Its subcellular location is the mitochondrion inner membrane. In terms of biological role, mitochondrial membrane ATP synthase (F(1)F(0) ATP synthase or Complex V) produces ATP from ADP in the presence of a proton gradient across the membrane which is generated by electron transport complexes of the respiratory chain. F-type ATPases consist of two structural domains, F(1) - containing the extramembraneous catalytic core, and F(0) - containing the membrane proton channel, linked together by a central stalk and a peripheral stalk. During catalysis, ATP turnover in the catalytic domain of F(1) is coupled via a rotary mechanism of the central stalk subunits to proton translocation. Part of the complex F(1) domain and of the central stalk which is part of the complex rotary element. The polypeptide is ATP synthase subunit delta, mitochondrial (Caenorhabditis elegans).